The primary structure comprises 107 residues: uncharacterized protein (107 aa).

A signal peptide spans Met-1–Ser-20.

This is an uncharacterized protein from Listeria monocytogenes serovar 1/2a (strain ATCC BAA-679 / EGD-e).